A 75-amino-acid chain; its full sequence is Alpha-amylase inhibitor Paim-2 (75 aa).

Disulfide bonds link Cys10/Cys26 and Cys44/Cys72.

In terms of biological role, inhibits mammalian alpha-amylases specifically but has no action on plant and microbial alpha-amylases. This is Alpha-amylase inhibitor Paim-2 from Streptomyces olivaceoviridis (Streptomyces corchorusii).